The chain runs to 315 residues: Probable cell division protein WhiA (315 aa).

The H-T-H motif DNA-binding region spans 280–313 (SLKELGEMLDPPVGKSGINHRLRKIEKIAEELRT).

It belongs to the WhiA family.

Its function is as follows. Involved in cell division and chromosome segregation. The chain is Probable cell division protein WhiA from Clostridium beijerinckii (strain ATCC 51743 / NCIMB 8052) (Clostridium acetobutylicum).